The primary structure comprises 123 residues: Small ribosomal subunit protein uS12 (123 aa).

3-methylthioaspartic acid is present on Asp89.

It belongs to the universal ribosomal protein uS12 family. In terms of assembly, part of the 30S ribosomal subunit. Contacts proteins S8 and S17. May interact with IF1 in the 30S initiation complex.

Its function is as follows. With S4 and S5 plays an important role in translational accuracy. In terms of biological role, interacts with and stabilizes bases of the 16S rRNA that are involved in tRNA selection in the A site and with the mRNA backbone. Located at the interface of the 30S and 50S subunits, it traverses the body of the 30S subunit contacting proteins on the other side and probably holding the rRNA structure together. The combined cluster of proteins S8, S12 and S17 appears to hold together the shoulder and platform of the 30S subunit. This Rhizobium leguminosarum bv. trifolii (strain WSM2304) protein is Small ribosomal subunit protein uS12.